The primary structure comprises 210 residues: Glutathione S-transferase 2 (210 aa).

Residues 1–80 (MDFYYLPLSA…YLVEKYGKQN (80 aa)) enclose the GST N-terminal domain. Glutathione-binding positions include Ser9, 50–52 (HTI), and 64–66 (ESR). One can recognise a GST C-terminal domain in the interval 87 to 208 (CPKKRALINQ…AGCLEMKKYF (122 aa)).

Belongs to the GST superfamily. Theta family. As to quaternary structure, homodimer.

The enzyme catalyses RX + glutathione = an S-substituted glutathione + a halide anion + H(+). Functionally, conjugation of reduced glutathione to a wide number of exogenous and endogenous hydrophobic electrophiles. This chain is Glutathione S-transferase 2 (Gst2), found in Musca domestica (House fly).